Consider the following 346-residue polypeptide: F(420)H(2) dehydrogenase subunit F (346 aa).

4Fe-4S ferredoxin-type domains lie at 5–34 (IAEV…VKKA) and 46–76 (YEKG…ENEL). Residues cysteine 14, cysteine 17, cysteine 20, cysteine 24, cysteine 55, cysteine 58, cysteine 61, and cysteine 65 each contribute to the [4Fe-4S] cluster site.

The FPO complex is composed of at least 13 different subunits. Requires [4Fe-4S] cluster as cofactor. The cofactor is FAD.

The protein localises to the membrane. Its subcellular location is the cytoplasm. The enzyme catalyses methanophenazine + reduced coenzyme F420-(gamma-L-Glu)(n) = dihydromethanophenazine + oxidized coenzyme F420-(gamma-L-Glu)(n) + H(+). The catalysed reaction is reduced coenzyme F420-(gamma-L-Glu)(n) + 2 oxidized [2Fe-2S]-[ferredoxin] = oxidized coenzyme F420-(gamma-L-Glu)(n) + 2 reduced [2Fe-2S]-[ferredoxin] + 3 H(+). Its function is as follows. Component of the F(420)H(2) dehydrogenase (FPO complex) which is part of the energy-conserving F(420)H(2):heterodisulfide oxidoreductase system. The membrane-bound electron transfer system of the complex plays an important role in the metabolism of methylotrophic methanogens when the organisms grow on methanol or methylamines. Catalyzes the oxidation of methanophenazine to dihydromethanophenazine. It shuttles electrons from F(420)H(2), via FAD and iron-sulfur (Fe-S) centers, to methanophenazine (an electron carrier in the membrane). It couples the redox reaction to proton translocation (for every two electrons transferred, two hydrogen ions are translocated across the cytoplasmic membrane), and thus conserves the redox energy in a proton gradient. It also catalyzes the oxidation of F(420)H(2) with quinones such as 2,3-dimethyl-1,4-naphthoquinone, 2-methyl-1,4-naphthoquinone and tetramethyl-p-benzoquinone. Might have a dual function, acting as an electron input module when connected to the membrane integral Fpo complex, or as a soluble single subunit, being involved in the reoxydation of reduced ferredoxin in the cytoplasm. This chain is F(420)H(2) dehydrogenase subunit F (fpoF), found in Methanosarcina mazei (strain ATCC BAA-159 / DSM 3647 / Goe1 / Go1 / JCM 11833 / OCM 88) (Methanosarcina frisia).